Reading from the N-terminus, the 622-residue chain is Glutamyl-tRNA(Gln) amidotransferase subunit B, mitochondrial (622 aa).

The transit peptide at 1-54 (MSRIPTRELGRYLLQGQICQRGCVASSVSKSRAKQLGRHPLLPHDRHQPTQARH) directs the protein to the mitochondrion. The tract at residues 30-67 (KSRAKQLGRHPLLPHDRHQPTQARHAHTVTTTATPTQL) is disordered. Residues 57–67 (TVTTTATPTQL) show a composition bias toward low complexity.

Belongs to the GatB/GatE family. GatB subfamily. As to quaternary structure, subunit of the heterotrimeric GatCAB amidotransferase (AdT) complex, composed of A, B and C subunits.

The protein localises to the mitochondrion. It carries out the reaction L-glutamyl-tRNA(Gln) + L-glutamine + ATP + H2O = L-glutaminyl-tRNA(Gln) + L-glutamate + ADP + phosphate + H(+). Its function is as follows. Allows the formation of correctly charged Gln-tRNA(Gln) through the transamidation of misacylated Glu-tRNA(Gln) in the mitochondria. The reaction takes place in the presence of glutamine and ATP through an activated gamma-phospho-Glu-tRNA(Gln). The protein is Glutamyl-tRNA(Gln) amidotransferase subunit B, mitochondrial of Verticillium alfalfae (strain VaMs.102 / ATCC MYA-4576 / FGSC 10136) (Verticillium wilt of alfalfa).